We begin with the raw amino-acid sequence, 92 residues long: Kinetoplastid membrane protein 11C (92 aa).

Belongs to the KMP-11 family. Monomer.

Its subcellular location is the cytoplasm. It localises to the cytoskeleton. It is found in the cell projection. The protein resides in the cilium. The protein localises to the flagellum. Functionally, may be involved in the regulation of the cytoskeleton through interaction with the subpellicular microtubules. May be involved in parasite mobility and attachment to the surface of the host cell. Behaves as a strong immunogen during infection. The sequence is that of Kinetoplastid membrane protein 11C (KMP-11C) from Leishmania infantum.